A 326-amino-acid chain; its full sequence is Diaminopimelate epimerase (326 aa).

Asn-13 and Asn-72 together coordinate substrate. Residue Cys-81 is the Proton donor of the active site. Substrate is bound by residues Gly-82–Asn-83, Asn-169, Asn-205, and Glu-223–Arg-224. Catalysis depends on Cys-232, which acts as the Proton acceptor. Gly-233 to Thr-234 is a binding site for substrate.

The protein belongs to the diaminopimelate epimerase family. Homodimer.

Its subcellular location is the cytoplasm. The catalysed reaction is (2S,6S)-2,6-diaminopimelate = meso-2,6-diaminopimelate. It participates in amino-acid biosynthesis; L-lysine biosynthesis via DAP pathway; DL-2,6-diaminopimelate from LL-2,6-diaminopimelate: step 1/1. Its function is as follows. Catalyzes the stereoinversion of LL-2,6-diaminopimelate (L,L-DAP) to meso-diaminopimelate (meso-DAP), a precursor of L-lysine and an essential component of the bacterial peptidoglycan. This is Diaminopimelate epimerase from Enterococcus faecalis (strain ATCC 700802 / V583).